The primary structure comprises 110 residues: Parvalbumin alpha (110 aa).

At serine 2 the chain carries N-acetylserine. 2 positions are modified to phosphoserine: serine 2 and serine 24. EF-hand domains lie at 39–74 (KSPEDVKKVFHILDKDKSGFIEEEELGFILKGFSPD) and 78–110 (LSVKETKTLLAAGDKDGDGKIGADEFSTLVAES). Aspartate 52, aspartate 54, serine 56, phenylalanine 58, glutamate 60, glutamate 63, aspartate 91, aspartate 93, aspartate 95, lysine 97, and glutamate 102 together coordinate Ca(2+).

The protein belongs to the parvalbumin family.

In terms of biological role, in muscle, parvalbumin is thought to be involved in relaxation after contraction. It binds two calcium ions. The polypeptide is Parvalbumin alpha (PVALB) (Bos taurus (Bovine)).